A 419-amino-acid polypeptide reads, in one-letter code: Tyrosine--tRNA ligase (419 aa).

Y34 contributes to the L-tyrosine binding site. The 'HIGH' region signature appears at 39–48 (PSGDSMHIGH). Positions 168 and 172 each coordinate L-tyrosine. A 'KMSKS' region motif is present at residues 230–234 (KFGKS). K233 is an ATP binding site. In terms of domain architecture, S4 RNA-binding spans 352-418 (VNLVDWLVSL…GKKKYFLVSY (67 aa)).

The protein belongs to the class-I aminoacyl-tRNA synthetase family. TyrS type 1 subfamily. Homodimer.

It is found in the cytoplasm. It catalyses the reaction tRNA(Tyr) + L-tyrosine + ATP = L-tyrosyl-tRNA(Tyr) + AMP + diphosphate + H(+). In terms of biological role, catalyzes the attachment of tyrosine to tRNA(Tyr) in a two-step reaction: tyrosine is first activated by ATP to form Tyr-AMP and then transferred to the acceptor end of tRNA(Tyr). In Listeria welshimeri serovar 6b (strain ATCC 35897 / DSM 20650 / CCUG 15529 / CIP 8149 / NCTC 11857 / SLCC 5334 / V8), this protein is Tyrosine--tRNA ligase.